We begin with the raw amino-acid sequence, 302 residues long: tRNA pseudouridine synthase B (302 aa).

Aspartate 47 functions as the Nucleophile in the catalytic mechanism.

It belongs to the pseudouridine synthase TruB family. Type 1 subfamily.

It catalyses the reaction uridine(55) in tRNA = pseudouridine(55) in tRNA. Its function is as follows. Responsible for synthesis of pseudouridine from uracil-55 in the psi GC loop of transfer RNAs. This Methylobacillus flagellatus (strain ATCC 51484 / DSM 6875 / VKM B-1610 / KT) protein is tRNA pseudouridine synthase B.